Here is a 347-residue protein sequence, read N- to C-terminus: Inosamine-phosphate amidinotransferase 1 (347 aa).

Residues Asp-179 and His-227 contribute to the active site. Cys-332 functions as the Amidino-cysteine intermediate in the catalytic mechanism.

It belongs to the amidinotransferase family. Homodimer.

It carries out the reaction 1-amino-1-deoxy-scyllo-inositol 4-phosphate + L-arginine = 1-guanidino-1-deoxy-scyllo-inositol 4-phosphate + L-ornithine. Its pathway is antibiotic biosynthesis; streptomycin biosynthesis. Functionally, catalyzes two non-consecutive transamidination reactions. It converts scyllo-inosamine 4-phosphate into N-amidino-scyllo-inosamine 4-phosphate and N1-amidinostreptamine 6-phosphate into streptidine 6-phosphate. This chain is Inosamine-phosphate amidinotransferase 1 (strB1), found in Streptomyces griseus.